The following is a 234-amino-acid chain: Opacity protein V28 (234 aa).

A signal peptide is located at residue Ala1.

This sequence belongs to the opacity porin family.

It localises to the cell outer membrane. Functionally, implicated in a number of adherence functions. OPA proteins are implicated in pathogenesis and are subject to phase variation. The chain is Opacity protein V28 from Neisseria gonorrhoeae.